A 64-amino-acid chain; its full sequence is Antimicrobial peptide 1 (64 aa).

The N-terminal stretch at 1–26 (MAKVSSSLLKFAIVLILVLSMSAIIS) is a signal peptide. Disulfide bonds link C29/C46, C36/C50, and C45/C61.

Belongs to the AMP family.

It localises to the secreted. Its function is as follows. Possesses antifungal and antibacterial activity. The chain is Antimicrobial peptide 1 from Mesembryanthemum crystallinum (Common ice plant).